Consider the following 70-residue polypeptide: Small ribosomal subunit protein bS21A (70 aa).

This sequence belongs to the bacterial ribosomal protein bS21 family.

The protein is Small ribosomal subunit protein bS21A of Paraburkholderia xenovorans (strain LB400).